The chain runs to 173 residues: Shikimate kinase 1 (173 aa).

ATP is bound at residue 14 to 19 (GAGKST). Residue Ser-18 coordinates Mg(2+). Substrate contacts are provided by Asp-36, Arg-60, and Gly-82. Residue Arg-120 participates in ATP binding. Arg-140 contacts substrate. Gln-157 contributes to the ATP binding site.

Belongs to the shikimate kinase family. As to quaternary structure, monomer. The cofactor is Mg(2+).

The protein resides in the cytoplasm. The catalysed reaction is shikimate + ATP = 3-phosphoshikimate + ADP + H(+). The protein operates within metabolic intermediate biosynthesis; chorismate biosynthesis; chorismate from D-erythrose 4-phosphate and phosphoenolpyruvate: step 5/7. Functionally, catalyzes the specific phosphorylation of the 3-hydroxyl group of shikimic acid using ATP as a cosubstrate. The chain is Shikimate kinase 1 from Escherichia fergusonii (strain ATCC 35469 / DSM 13698 / CCUG 18766 / IAM 14443 / JCM 21226 / LMG 7866 / NBRC 102419 / NCTC 12128 / CDC 0568-73).